Consider the following 1627-residue polypeptide: Type III effector DspE (1627 aa).

Composition is skewed to polar residues over residues 22 to 44 (AKTS…SLIQ) and 59 to 74 (GNGS…STTL). 2 disordered regions span residues 22-102 (AKTS…GPIQ) and 436-464 (QTQA…TPGW). Short sequence motifs (wxxxE) lie at residues 464-468 (WNLSD), 514-520 (WEASSVE), and 660-667 (WQNAANHD).

This sequence belongs to the AvrE family.

It localises to the secreted. Its subcellular location is the host cell. In terms of biological role, major virulence factor that may function as a water- and solute-permeable channel dedicated to creating osmotic/water potential perturbation and a water- and nutrient-rich apoplast in which bacteria multiply within the infected plant tissues. Required for plant cell death in N.benthamiana leaves and leaf cell death in S.tuberosum. Essential for pathogenicity. Does not suppress callose formation. In Pectobacterium carotovorum (Erwinia carotovora), this protein is Type III effector DspE.